The sequence spans 355 residues: Uroporphyrinogen decarboxylase (355 aa).

Substrate is bound by residues arginine 27–arginine 31, phenylalanine 46, aspartate 78, tyrosine 155, serine 210, and histidine 328.

Belongs to the uroporphyrinogen decarboxylase family. Homodimer.

The protein resides in the cytoplasm. The catalysed reaction is uroporphyrinogen III + 4 H(+) = coproporphyrinogen III + 4 CO2. Its pathway is porphyrin-containing compound metabolism; protoporphyrin-IX biosynthesis; coproporphyrinogen-III from 5-aminolevulinate: step 4/4. Its function is as follows. Catalyzes the decarboxylation of four acetate groups of uroporphyrinogen-III to yield coproporphyrinogen-III. The protein is Uroporphyrinogen decarboxylase of Pseudomonas aeruginosa (strain ATCC 15692 / DSM 22644 / CIP 104116 / JCM 14847 / LMG 12228 / 1C / PRS 101 / PAO1).